The primary structure comprises 556 residues: MTPAELSELITETARTTLDAHGLDSSVVPESATVERPRNPEHGDYATNIAMQVAKKAGTNPREFGTWLAESLGAHEGIDEATVAGPGFINIRLAAAAQGKIVEDILTVGANFGHGDELAGAAINLEFVSANPTGPIHLGGTRWAAVGDSLGRVLNARGAKVTREYYFNDHGAQIDRFARSLVAAAKGEPTPEDGYGGDYIQDIASQIVEANPDWQKLGADEAQELFRSQGVELMFAHIKRTLAEFGTEFDVYFHENSLFESGAVEAAIQKIKDNGNLYEADGAWWLRSTNFGDDKDRVVIKSDGNAAYIAGDIAYVADKFDRGHNLCIYMLGADHHGYIARLRAAAAAMGYDPQQVEVLIGQLVNLVKDGKAVRMSKRAGTVITLDDLVEAIGVDAARYAMIRSSVDSSLDIDMDLWASKSNDNPVFYVQYAHARLCSLARKAEDLGVTREGADLSLLTHDREGDLIRTLGEFPAVVKTAAELREPHRVARYAESLAGTFHRFYDACQILPKPSDDEQTVAENKALFAARLSLAAASRQTLANALELLGVAAPERM.

The 'HIGH' region signature appears at Ala130–Gly140.

Belongs to the class-I aminoacyl-tRNA synthetase family. As to quaternary structure, monomer.

The protein resides in the cytoplasm. The enzyme catalyses tRNA(Arg) + L-arginine + ATP = L-arginyl-tRNA(Arg) + AMP + diphosphate. This chain is Arginine--tRNA ligase, found in Corynebacterium jeikeium (strain K411).